The chain runs to 487 residues: b(0,+)-type amino acid transporter 1 (487 aa).

Positions 1 to 15 are enriched in basic and acidic residues; it reads MGDTGLRKRREDEKS. Residues 1 to 22 form a disordered region; sequence MGDTGLRKRREDEKSIQSQEPK. The Cytoplasmic portion of the chain corresponds to 1–31; it reads MGDTGLRKRREDEKSIQSQEPKTTSLQKELG. Position 18 is a phosphoserine (S18). Residues 32–55 form a helical membrane-spanning segment; sequence LISGISIIVGTIIGSGIFVSPKSV. 43–47 contacts L-arginine; the sequence is IIGSG. The Extracellular segment spans residues 56 to 62; sequence LSNTEAV. A helical transmembrane segment spans residues 63 to 84; that stretch reads GPCLIIWAACGVLATLGALCFA. Residues 85-110 lie on the Cytoplasmic side of the membrane; it reads ELGTMITKSGGEYPYLMEAYGPIPAY. A helical transmembrane segment spans residues 111–137; that stretch reads LFSWASLIVIKPTSFAIICLSFSEYVC. Residues 138-147 lie on the Extracellular side of the membrane; that stretch reads APFYVGCKPP. The next 2 helical transmembrane spans lie at 148–169 and 170–193; these read QIVV…NSLS and VRLG…IIII. The Extracellular portion of the chain corresponds to 194–217; the sequence is SGLVLLAQGNTKNFDNSFEGAQLS. The chain crosses the membrane as a helical span at residues 218–238; sequence VGAISLAFYNGLWAYDGWNQL. Residue D233 participates in L-arginine binding. The Cytoplasmic segment spans residues 239–251; the sequence is NYITEELRNPYRN. The chain crosses the membrane as a helical span at residues 252-274; the sequence is LPLAIIIGIPLVTACYILMNVSY. The Extracellular segment spans residues 275–302; that stretch reads FTVMTATELLQSQAVAVTFGDRVLYPAS. A helical transmembrane segment spans residues 303–325; it reads WIVPLFVAFSTIGAANGTCFTAG. Topologically, residues 326–351 are cytoplasmic; that stretch reads RLIYVAGREGHMLKVLSYISVRRLTP. 2 helical membrane passes run 352 to 370 and 371 to 391; these read APAI…IPGD and INSL…LTIL. The Cytoplasmic segment spans residues 392–410; the sequence is GLIVMRFTRKELERPIKVP. Residues 411-431 form a helical membrane-spanning segment; sequence VVIPVLMTLISVFLVLAPIIS. Over 432-434 the chain is Extracellular; the sequence is KPT. Residues 435-450 form a helical membrane-spanning segment; sequence WEYLYCVLFILSGLLF. Over 451–487 the chain is Cytoplasmic; that stretch reads YFLFVHYKFGWAQKISKPITMHLQMLMEVVPPEEDPE.

This sequence belongs to the amino acid-polyamine-organocation (APC) superfamily. As to quaternary structure, disulfide-linked heterodimer composed of the catalytic light chain subunit SLC7A9 and the heavy chain subunit SLC3A1. The heterodimer is the minimal functional unit. Assembles in heterotetramers (dimers of heterodimers) and higher order oligomers; the oligomerization is mediated by SLC3A1 likely to prevent degradation and facilitate heteromer trafficking to the plasma membrane. Interacts with CAV1. In terms of tissue distribution, expressed in the brush border membrane in the kidney (at protein level). Kidney, small intestine, liver and placenta.

The protein localises to the apical cell membrane. It localises to the cell membrane. The enzyme catalyses L-leucine(out) + L-arginine(in) = L-leucine(in) + L-arginine(out). The catalysed reaction is L-histidine(out) + L-arginine(in) = L-histidine(in) + L-arginine(out). It catalyses the reaction L-arginine(in) + L-phenylalanine(out) = L-arginine(out) + L-phenylalanine(in). It carries out the reaction L-cysteine(out) + L-arginine(in) = L-cysteine(in) + L-arginine(out). The enzyme catalyses L-cystine(out) + L-arginine(in) = L-cystine(in) + L-arginine(out). The catalysed reaction is L-lysine(out) + L-arginine(in) = L-lysine(in) + L-arginine(out). Functionally, associates with SLC3A1 to form a functional transporter complex that mediates the electrogenic exchange between cationic amino acids and neutral amino acids, with a stoichiometry of 1:1. Has system b(0,+)-like activity with high affinity for extracellular cationic amino acids and L-cystine and lower affinity for intracellular neutral amino acids. Substrate exchange is driven by high concentration of intracellular neutral amino acids and the intracellular reduction of L-cystine to L-cysteine. Required for reabsorption of L-cystine and dibasic amino acids across the brush border membrane in renal proximal tubules. This Homo sapiens (Human) protein is b(0,+)-type amino acid transporter 1.